Consider the following 291-residue polypeptide: MEMO1 family protein TON_0132 (291 aa).

The protein belongs to the MEMO1 family.

The sequence is that of MEMO1 family protein TON_0132 from Thermococcus onnurineus (strain NA1).